A 25-amino-acid polypeptide reads, in one-letter code: Cysteine protease inhibitor 2 (25 aa).

This sequence belongs to the protease inhibitor I3 (leguminous Kunitz-type inhibitor) family. As to expression, cortex of tuber.

Inhibitor of subtilisin. Inhibits moderately trypsin and chymotrypsin (serine proteases). May protect the plant by inhibiting proteases of invading organisms. The protein is Cysteine protease inhibitor 2 of Solanum tuberosum (Potato).